The chain runs to 959 residues: Isoleucine--tRNA ligase (959 aa).

The 'HIGH' region signature appears at 66–76; sequence PYANGDLHIGH. E592 lines the L-isoleucyl-5'-AMP pocket. The 'KMSKS' region signature appears at 633 to 637; it reads KMSKS. An ATP-binding site is contributed by K636. Zn(2+) contacts are provided by C922, C925, C942, and C945.

The protein belongs to the class-I aminoacyl-tRNA synthetase family. IleS type 1 subfamily. Monomer. It depends on Zn(2+) as a cofactor.

Its subcellular location is the cytoplasm. It carries out the reaction tRNA(Ile) + L-isoleucine + ATP = L-isoleucyl-tRNA(Ile) + AMP + diphosphate. In terms of biological role, catalyzes the attachment of isoleucine to tRNA(Ile). As IleRS can inadvertently accommodate and process structurally similar amino acids such as valine, to avoid such errors it has two additional distinct tRNA(Ile)-dependent editing activities. One activity is designated as 'pretransfer' editing and involves the hydrolysis of activated Val-AMP. The other activity is designated 'posttransfer' editing and involves deacylation of mischarged Val-tRNA(Ile). In Ralstonia pickettii (strain 12J), this protein is Isoleucine--tRNA ligase.